The sequence spans 101 residues: NAD(P)H-quinone oxidoreductase subunit 4L, chloroplastic (101 aa).

A run of 3 helical transmembrane segments spans residues 2–22, 32–52, and 61–81; these read MLEHVLVLSAYLFSIGIYGLI, MCLELILNAVNLNFVTFSDFF, and IFSIFVIAIAAAEAAIGPAIV.

Belongs to the complex I subunit 4L family. NDH is composed of at least 16 different subunits, 5 of which are encoded in the nucleus.

Its subcellular location is the plastid. The protein localises to the chloroplast thylakoid membrane. It catalyses the reaction a plastoquinone + NADH + (n+1) H(+)(in) = a plastoquinol + NAD(+) + n H(+)(out). The enzyme catalyses a plastoquinone + NADPH + (n+1) H(+)(in) = a plastoquinol + NADP(+) + n H(+)(out). In terms of biological role, NDH shuttles electrons from NAD(P)H:plastoquinone, via FMN and iron-sulfur (Fe-S) centers, to quinones in the photosynthetic chain and possibly in a chloroplast respiratory chain. The immediate electron acceptor for the enzyme in this species is believed to be plastoquinone. Couples the redox reaction to proton translocation, and thus conserves the redox energy in a proton gradient. The chain is NAD(P)H-quinone oxidoreductase subunit 4L, chloroplastic from Manihot esculenta (Cassava).